The following is a 216-amino-acid chain: L-fuculose phosphate aldolase (216 aa).

Residues 28–29 (GN), 43–44 (TG), and 71–72 (SS) contribute to the substrate site. Glu73 functions as the Proton donor/acceptor in the catalytic mechanism. The Zn(2+) site is built by Glu73, His92, His94, and His155.

It belongs to the aldolase class II family. AraD/FucA subfamily. In terms of assembly, homotetramer. Requires Zn(2+) as cofactor.

The enzyme catalyses L-fuculose 1-phosphate = (S)-lactaldehyde + dihydroxyacetone phosphate. Its pathway is carbohydrate degradation; L-fucose degradation; L-lactaldehyde and glycerone phosphate from L-fucose: step 3/3. In terms of biological role, involved in the degradation of L-fucose and D-arabinose. Catalyzes the reversible cleavage of L-fuculose 1-phosphate (Fuc1P) to yield dihydroxyacetone phosphate (DHAP) and L-lactaldehyde. The polypeptide is L-fuculose phosphate aldolase (Haemophilus influenzae (strain ATCC 51907 / DSM 11121 / KW20 / Rd)).